The chain runs to 288 residues: Cyclin-dependent kinase 2 homolog (288 aa).

In terms of domain architecture, Protein kinase spans 4–284 (YHGLEKIGEG…AKQALEHAYF (281 aa)). ATP contacts are provided by residues 10 to 18 (IGEGTYGVV) and Lys32. The residue at position 14 (Thr14) is a Phosphothreonine. A Phosphotyrosine modification is found at Tyr15. Residue Asp125 is the Proton acceptor of the active site. Thr158 bears the Phosphothreonine mark.

It belongs to the protein kinase superfamily. CMGC Ser/Thr protein kinase family. CDC2/CDKX subfamily. In terms of assembly, may form a complex composed of at least the catalytic subunit CRK2 and a cyclin. The cofactor is Mg(2+).

The protein resides in the cytoplasm. It catalyses the reaction L-seryl-[protein] + ATP = O-phospho-L-seryl-[protein] + ADP + H(+). The enzyme catalyses L-threonyl-[protein] + ATP = O-phospho-L-threonyl-[protein] + ADP + H(+). The catalysed reaction is [DNA-directed RNA polymerase] + ATP = phospho-[DNA-directed RNA polymerase] + ADP + H(+). Its activity is regulated as follows. Phosphorylation at Thr-14 or Tyr-15 inactivates the enzyme, while phosphorylation at Thr-158 activates it. In terms of biological role, serine/threonine-protein kinase. Involved in the control of the cell cycle. Required for entry into S-phase and mitosis. Probable component of the kinase complex that phosphorylates the repetitive C-terminus of RNA polymerase II. In Plasmodium vivax, this protein is Cyclin-dependent kinase 2 homolog.